Reading from the N-terminus, the 194-residue chain is Phosphoheptose isomerase (194 aa).

Residues 37 to 194 (ISNSFKQGGK…LIEFEMAKQA (158 aa)) form the SIS domain. Residue 52–54 (NGG) participates in substrate binding. Residues His61 and Glu65 each coordinate Zn(2+). Residues Glu65, 93-94 (ND), 119-121 (STS), Ser124, and Gln172 contribute to the substrate site. Zn(2+)-binding residues include Gln172 and His180.

The protein belongs to the SIS family. GmhA subfamily. In terms of assembly, homotetramer. The cofactor is Zn(2+).

Its subcellular location is the cytoplasm. The enzyme catalyses 2 D-sedoheptulose 7-phosphate = D-glycero-alpha-D-manno-heptose 7-phosphate + D-glycero-beta-D-manno-heptose 7-phosphate. It functions in the pathway carbohydrate biosynthesis; D-glycero-D-manno-heptose 7-phosphate biosynthesis; D-glycero-alpha-D-manno-heptose 7-phosphate and D-glycero-beta-D-manno-heptose 7-phosphate from sedoheptulose 7-phosphate: step 1/1. Functionally, catalyzes the isomerization of sedoheptulose 7-phosphate in D-glycero-D-manno-heptose 7-phosphate. This is Phosphoheptose isomerase from Haemophilus influenzae (strain 86-028NP).